The chain runs to 203 residues: Pro-FMRFamide-related neuropeptide VF (203 aa).

Positions 1–26 (MEIISSKRFILLTLATSSFLTSNTLC) are cleaved as a signal peptide. Positions 27–57 (SDELMMPHFHSKEGYGKYYQLRGIPKGVKER) are excised as a propeptide. Phe-94 bears the Phenylalanine amide mark. The propeptide occupies 97-106 (NIEDRRSPRA). Position 125 is a phenylalanine amide (Phe-125). A propeptide spanning residues 128 to 203 (TTARRITKTL…QPVLQGAMKL (76 aa)) is cleaved from the precursor. The disordered stretch occupies residues 161–186 (HQEIQSPGQEQPRKRVFTETDDAERK). Positions 171-186 (QPRKRVFTETDDAERK) are enriched in basic and acidic residues.

The protein belongs to the FARP (FMRFamide related peptide) family. As to expression, isoform 1 is expressed at high levels in the hypothalamus and eye. Isoform 2 is specifically expressed in a region between the dorsomedial hypothalamic and ventromedial hypothalamic nuclei.

The protein localises to the secreted. Its function is as follows. Efficiently inhibits forskolin-induced production of cAMP. Acts as a potent negative regulator of gonadotropin synthesis and secretion. Induces secretion of prolactin. In terms of biological role, efficiently inhibits forskolin-induced production of cAMP. Blocks morphine-induced analgesia. The chain is Pro-FMRFamide-related neuropeptide VF (Npvf) from Rattus norvegicus (Rat).